A 526-amino-acid polypeptide reads, in one-letter code: Methane monooxygenase component A alpha chain (526 aa).

Glu-114, Glu-144, and His-147 together coordinate Fe cation. Cys-151 is an active-site residue. Fe cation-binding residues include Glu-209, Glu-243, and His-246.

Belongs to the TmoA/XamoA family. In terms of assembly, m.trichosporium has two forms of methane monooxygenase, a soluble and a membrane-bound type. The soluble type consists of four components (A to D): protein A, comprising three chains, in an alpha-2, beta-2, gamma-2 configuration, is a nonheme iron protein containing an unusual mu-hydroxo bridge structure at its active site and interacts with both oxygen and methane. The cofactor is Fe cation.

It catalyses the reaction methane + NADH + O2 + H(+) = methanol + NAD(+) + H2O. It carries out the reaction methane + NADPH + O2 + H(+) = methanol + NADP(+) + H2O. In terms of biological role, responsible for the initial oxygenation of methane to methanol in methanotrophs. It also catalyzes the monohydroxylation of a variety of unactivated alkenes, alicyclic, aromatic and heterocyclic compounds. This is Methane monooxygenase component A alpha chain (mmoX) from Methylosinus trichosporium.